A 140-amino-acid polypeptide reads, in one-letter code: Probable transport accessory protein MmpS4 (140 aa).

The chain crosses the membrane as a helical span at residues 2-22 (LMRTWIPLVILVVVIVGGFTV).

It belongs to the MmpS family.

Its subcellular location is the cell membrane. The sequence is that of Probable transport accessory protein MmpS4 (mmpS4) from Mycobacterium bovis (strain ATCC BAA-935 / AF2122/97).